We begin with the raw amino-acid sequence, 372 residues long: Chaperone protein DnaJ (372 aa).

The 65-residue stretch at 5–69 (DYYEVLGVSK…DKRKQYDQFG (65 aa)) folds into the J domain. The CR-type zinc-finger motif lies at 139–221 (GVDKIIELDL…CKGKGKYLER (83 aa)). Residues Cys152, Cys155, Cys169, Cys172, Cys195, Cys198, Cys209, and Cys212 each coordinate Zn(2+). CXXCXGXG motif repeat units lie at residues 152–159 (CSVCFGSG), 169–176 (CNNCHGTG), 195–202 (CNVCNGAG), and 209–216 (CKNCKGKG).

Belongs to the DnaJ family. Homodimer. It depends on Zn(2+) as a cofactor.

The protein localises to the cytoplasm. In terms of biological role, participates actively in the response to hyperosmotic and heat shock by preventing the aggregation of stress-denatured proteins and by disaggregating proteins, also in an autonomous, DnaK-independent fashion. Unfolded proteins bind initially to DnaJ; upon interaction with the DnaJ-bound protein, DnaK hydrolyzes its bound ATP, resulting in the formation of a stable complex. GrpE releases ADP from DnaK; ATP binding to DnaK triggers the release of the substrate protein, thus completing the reaction cycle. Several rounds of ATP-dependent interactions between DnaJ, DnaK and GrpE are required for fully efficient folding. Also involved, together with DnaK and GrpE, in the DNA replication of plasmids through activation of initiation proteins. The protein is Chaperone protein DnaJ of Mycoplasma mycoides subsp. mycoides SC (strain CCUG 32753 / NCTC 10114 / PG1).